The chain runs to 97 residues: Cell division topological specificity factor (97 aa).

It belongs to the MinE family.

Its function is as follows. Prevents the cell division inhibition by proteins MinC and MinD at internal division sites while permitting inhibition at polar sites. This ensures cell division at the proper site by restricting the formation of a division septum at the midpoint of the long axis of the cell. This chain is Cell division topological specificity factor, found in Synechococcus sp. (strain RCC307).